The primary structure comprises 260 residues: 1-(5-phosphoribosyl)-5-[(5-phosphoribosylamino)methylideneamino] imidazole-4-carboxamide isomerase (260 aa).

Catalysis depends on Asp-8, which acts as the Proton acceptor. The active-site Proton donor is Asp-130.

Belongs to the HisA/HisF family.

The protein localises to the cytoplasm. It catalyses the reaction 1-(5-phospho-beta-D-ribosyl)-5-[(5-phospho-beta-D-ribosylamino)methylideneamino]imidazole-4-carboxamide = 5-[(5-phospho-1-deoxy-D-ribulos-1-ylimino)methylamino]-1-(5-phospho-beta-D-ribosyl)imidazole-4-carboxamide. The protein operates within amino-acid biosynthesis; L-histidine biosynthesis; L-histidine from 5-phospho-alpha-D-ribose 1-diphosphate: step 4/9. In Chlorobaculum parvum (strain DSM 263 / NCIMB 8327) (Chlorobium vibrioforme subsp. thiosulfatophilum), this protein is 1-(5-phosphoribosyl)-5-[(5-phosphoribosylamino)methylideneamino] imidazole-4-carboxamide isomerase.